A 79-amino-acid polypeptide reads, in one-letter code: MIKKINAVISNLFLTLIRFYRSWISPLLGPSCRFVPTCSEYGVEAIEKHGPWKGGWLTLKRLLRCNPLTPCGYDPVPDK.

It belongs to the UPF0161 family.

It is found in the cell inner membrane. Its function is as follows. Could be involved in insertion of integral membrane proteins into the membrane. The chain is Putative membrane protein insertion efficiency factor from Prochlorococcus marinus (strain SARG / CCMP1375 / SS120).